The chain runs to 74 residues: Antimicrobial peptide AcrAP2 (74 aa).

A signal peptide spans 1–22 (MEIKYLLTVFLVLLIVSDHCQA). Position 40 is a lysine amide (Lys-40). A propeptide spanning residues 46–74 (NLDGQIDRFRNFRKRDAELEELLSKLPIY) is cleaved from the precursor.

It belongs to the non-disulfide-bridged peptide (NDBP) superfamily. Short antimicrobial peptide (group 4) family. Expressed by the venom gland.

The protein resides in the secreted. Its subcellular location is the target cell membrane. Its function is as follows. Has antimicrobial activity against the Gram-positive bacteria S.aureus (MIC=8 uM) and the yeast C.albicans (MIC=16 uM). Causes hemolysis on horse erythrocytes (64 uM for 100% hemolysis). Minimum bactericidal concentrations have also been tested against S.aureus and is four-fold higher (MBC=32 uM). This chain is Antimicrobial peptide AcrAP2, found in Androctonus crassicauda (Arabian fat-tailed scorpion).